A 395-amino-acid polypeptide reads, in one-letter code: NAD(P)H-quinone oxidoreductase subunit H, chloroplastic (395 aa).

It belongs to the complex I 49 kDa subunit family. NDH is composed of at least 16 different subunits, 5 of which are encoded in the nucleus.

Its subcellular location is the plastid. It localises to the chloroplast thylakoid membrane. The catalysed reaction is a plastoquinone + NADH + (n+1) H(+)(in) = a plastoquinol + NAD(+) + n H(+)(out). The enzyme catalyses a plastoquinone + NADPH + (n+1) H(+)(in) = a plastoquinol + NADP(+) + n H(+)(out). In terms of biological role, NDH shuttles electrons from NAD(P)H:plastoquinone, via FMN and iron-sulfur (Fe-S) centers, to quinones in the photosynthetic chain and possibly in a chloroplast respiratory chain. The immediate electron acceptor for the enzyme in this species is believed to be plastoquinone. Couples the redox reaction to proton translocation, and thus conserves the redox energy in a proton gradient. This chain is NAD(P)H-quinone oxidoreductase subunit H, chloroplastic, found in Coffea arabica (Arabian coffee).